A 163-amino-acid polypeptide reads, in one-letter code: Ureidoglycolate lyase 2 (163 aa).

It belongs to the ureidoglycolate lyase family. Homodimer. Requires Ni(2+) as cofactor.

The enzyme catalyses (S)-ureidoglycolate = urea + glyoxylate. The protein operates within nitrogen metabolism; (S)-allantoin degradation. Its function is as follows. Catalyzes the catabolism of the allantoin degradation intermediate (S)-ureidoglycolate, generating urea and glyoxylate. Involved in the utilization of allantoin as nitrogen source. The polypeptide is Ureidoglycolate lyase 2 (Rhizobium meliloti (strain 1021) (Ensifer meliloti)).